Reading from the N-terminus, the 449-residue chain is Trigger factor (449 aa).

Residues 162–243 (GEFVTINITA…ITATKQRELP (82 aa)) enclose the PPIase FKBP-type domain. The span at 428 to 437 (GNEIDPKEYF) shows a compositional bias: basic and acidic residues. The disordered stretch occupies residues 428 to 449 (GNEIDPKEYFGEEEVAETESEA). Over residues 438–449 (GEEEVAETESEA) the composition is skewed to acidic residues.

It belongs to the FKBP-type PPIase family. Tig subfamily.

Its subcellular location is the cytoplasm. It catalyses the reaction [protein]-peptidylproline (omega=180) = [protein]-peptidylproline (omega=0). Functionally, involved in protein export. Acts as a chaperone by maintaining the newly synthesized protein in an open conformation. Functions as a peptidyl-prolyl cis-trans isomerase. The chain is Trigger factor from Corynebacterium glutamicum (strain R).